The sequence spans 364 residues: Mannonate dehydratase (364 aa).

It belongs to the mannonate dehydratase family. Fe(2+) serves as cofactor. Requires Mn(2+) as cofactor.

It catalyses the reaction D-mannonate = 2-dehydro-3-deoxy-D-gluconate + H2O. The protein operates within carbohydrate metabolism; pentose and glucuronate interconversion. Catalyzes the dehydration of D-mannonate. In Endomicrobium trichonymphae, this protein is Mannonate dehydratase.